The chain runs to 399 residues: Succinate--CoA ligase [ADP-forming] subunit beta (399 aa).

The region spanning 9–254 (KELLAKFGVA…ETEEDPAEIE (246 aa)) is the ATP-grasp domain. Residues Lys-46, 53–55 (GRG), Ala-112, and Glu-117 each bind ATP. Residues Asn-209 and Asp-223 each coordinate Mg(2+). Substrate contacts are provided by residues Asn-274 and 331 to 333 (GIM).

Belongs to the succinate/malate CoA ligase beta subunit family. In terms of assembly, heterotetramer of two alpha and two beta subunits. Mg(2+) serves as cofactor.

It catalyses the reaction succinate + ATP + CoA = succinyl-CoA + ADP + phosphate. The catalysed reaction is GTP + succinate + CoA = succinyl-CoA + GDP + phosphate. The protein operates within carbohydrate metabolism; tricarboxylic acid cycle; succinate from succinyl-CoA (ligase route): step 1/1. Functionally, succinyl-CoA synthetase functions in the citric acid cycle (TCA), coupling the hydrolysis of succinyl-CoA to the synthesis of either ATP or GTP and thus represents the only step of substrate-level phosphorylation in the TCA. The beta subunit provides nucleotide specificity of the enzyme and binds the substrate succinate, while the binding sites for coenzyme A and phosphate are found in the alpha subunit. In Rhizorhabdus wittichii (strain DSM 6014 / CCUG 31198 / JCM 15750 / NBRC 105917 / EY 4224 / RW1) (Sphingomonas wittichii), this protein is Succinate--CoA ligase [ADP-forming] subunit beta.